The chain runs to 124 residues: Small ribosomal subunit protein uS12 (124 aa).

The tract at residues 1–30 (MPTIQQLVRKGRQDKVAKTKTAALKGSPQR) is disordered. D89 carries the post-translational modification 3-methylthioaspartic acid. The tract at residues 102–124 (ADTQGVKNRKQARSRYGAKKEKS) is disordered. Over residues 108-118 (KNRKQARSRYG) the composition is skewed to basic residues.

The protein belongs to the universal ribosomal protein uS12 family. In terms of assembly, part of the 30S ribosomal subunit. Contacts proteins S8 and S17. May interact with IF1 in the 30S initiation complex.

Its function is as follows. With S4 and S5 plays an important role in translational accuracy. Interacts with and stabilizes bases of the 16S rRNA that are involved in tRNA selection in the A site and with the mRNA backbone. Located at the interface of the 30S and 50S subunits, it traverses the body of the 30S subunit contacting proteins on the other side and probably holding the rRNA structure together. The combined cluster of proteins S8, S12 and S17 appears to hold together the shoulder and platform of the 30S subunit. This chain is Small ribosomal subunit protein uS12, found in Saccharopolyspora erythraea (strain ATCC 11635 / DSM 40517 / JCM 4748 / NBRC 13426 / NCIMB 8594 / NRRL 2338).